The sequence spans 287 residues: Lycopene elongase/hydratase (287 aa).

The next 7 membrane-spanning stretches (helical) occupy residues 15 to 35, 37 to 57, 87 to 107, 137 to 157, 166 to 186, 218 to 238, and 265 to 285; these read ISWI…AGEI, WLFW…MYGI, TLLW…FIFG, FIDA…GATI, MWIA…LGAV, LLAA…GIAI, and VFLW…IAIH.

Belongs to the UbiA prenyltransferase family.

The protein localises to the cell membrane. It catalyses the reaction all-trans-lycopene + dimethylallyl diphosphate + A + H2O = nonaflavuxanthin + AH2 + diphosphate. It carries out the reaction nonaflavuxanthin + dimethylallyl diphosphate + A + H2O = flavuxanthin + AH2 + diphosphate. The protein operates within carotenoid biosynthesis. Functionally, catalyzes the elongation of the C(40) carotenoid all-trans-lycopene to the acyclic C(50) carotenoid flavuxanthin during decaprenoxanthin biosynthesis. Acts as a bifunctional enzyme that catalyzes the elongation of lycopene by attaching a C(5) isoprene unit at C-2, as well as the hydroxylation of the new isoprene unit. The enzyme acts at both ends of the substrate, forming the C(50) carotenoid flavuxanthin via the C(45) intermediate nonaflavuxanthin. This is Lycopene elongase/hydratase from Corynebacterium glutamicum (strain ATCC 13032 / DSM 20300 / JCM 1318 / BCRC 11384 / CCUG 27702 / LMG 3730 / NBRC 12168 / NCIMB 10025 / NRRL B-2784 / 534).